Reading from the N-terminus, the 174-residue chain is Inactive protein RESTRICTED TEV MOVEMENT 1 (174 aa).

Positions 1–152 constitute a Jacalin-type lectin domain; it reads MKIGPVGKHD…LQYIGVYLRP (152 aa).

Belongs to the jacalin lectin family. Self-interacts. Interacts with RTM3.

It is found in the cytoplasm. In terms of biological role, unable to mediate restriction of long-distance movement of the pathogenic tobacco etch virus (TEV) without causing a hypersensitive response or inducing systemic acquired resistance. This chain is Inactive protein RESTRICTED TEV MOVEMENT 1 (RTM1), found in Arabidopsis thaliana (Mouse-ear cress).